Consider the following 132-residue polypeptide: Fibroblast growth factor 1 (132 aa).

Residues Asn-10 and 108-120 (KTKPGSRTHFGQK) each bind heparin.

The protein belongs to the heparin-binding growth factors family.

The protein localises to the secreted. The protein resides in the cytoplasm. It is found in the cell cortex. It localises to the cytosol. Its subcellular location is the nucleus. Its function is as follows. Plays an important role in the regulation of cell survival, cell division, angiogenesis, cell differentiation and cell migration. Functions as a potent mitogen in vitro. Acts as a ligand for FGFR1 and integrins. Binds to FGFR1 in the presence of heparin leading to FGFR1 dimerization and activation via sequential autophosphorylation on tyrosine residues which act as docking sites for interacting proteins, leading to the activation of several signaling cascades. Binds to integrins. Its binding to integrins and subsequent ternary complex formation with integrins and FGFR1 are essential for FGF1 signaling. In Notophthalmus viridescens (Eastern newt), this protein is Fibroblast growth factor 1 (fgf1).